The chain runs to 169 residues: GSAGLGALVLFAAYANDLSYFAANGDTYPYFKDIGEISFSLANPYVVAGLLFGGLIPYLFGGIAMTAVGKAASAIVEEVRRQFREKPGIMAGTEKPDYGRAVDLLTKAAIREMVIPSLLPVLAPLVVYFGVLLISGSKAFAFAALGAYLLAVIMNRVLVAICMTLVGSS.

A run of 3 helical transmembrane segments spans residues 45 to 65 (YVVAGLLFGGLIPYLFGGIAM), 114 to 134 (VIPSLLPVLAPLVVYFGVLLI), and 141 to 161 (AFAALGAYLLAVIMNRVLVAI).

The protein belongs to the H(+)-translocating pyrophosphatase (TC 3.A.10) family. Homodimer. Mg(2+) serves as cofactor.

It is found in the cell inner membrane. The enzyme catalyses diphosphate + H2O + H(+)(in) = 2 phosphate + 2 H(+)(out). Functionally, proton pump that utilizes the energy of pyrophosphate hydrolysis as the driving force for proton movement across the membrane. Generates a proton motive force. This chain is Pyrophosphate-energized proton pump 1 (hppA1), found in Rhizobium leguminosarum bv. trifolii.